The sequence spans 697 residues: Elongation factor G 2 (697 aa).

Residues 5–280 form the tr-type G domain; the sequence is SKYRNIGIFA…AVVDYLPAPD (276 aa). GTP contacts are provided by residues 14–21, 78–82, and 132–135; these read AHVDAGKT, DTPGH, and NKLD.

Belongs to the TRAFAC class translation factor GTPase superfamily. Classic translation factor GTPase family. EF-G/EF-2 subfamily.

Its subcellular location is the cytoplasm. Functionally, catalyzes the GTP-dependent ribosomal translocation step during translation elongation. During this step, the ribosome changes from the pre-translocational (PRE) to the post-translocational (POST) state as the newly formed A-site-bound peptidyl-tRNA and P-site-bound deacylated tRNA move to the P and E sites, respectively. Catalyzes the coordinated movement of the two tRNA molecules, the mRNA and conformational changes in the ribosome. The chain is Elongation factor G 2 (fusB) from Shewanella oneidensis (strain ATCC 700550 / JCM 31522 / CIP 106686 / LMG 19005 / NCIMB 14063 / MR-1).